The primary structure comprises 857 residues: MLRLGALRLRGLALRSSQGRPSSAGLREGQESPPSPPEWKDRAETVIIGGGCVGVSLAYHLAKAGMRDVVLLEKSELTAGSTWHAAGLTTYFHPGINLKKIHYDSIKLYERLEEETGQVVGFHQPGSIRLATTPERVDEFKYQMTRTNWHATEQYIIEPEKIHELFPLLNMDKILAGLYNPGDGHIDPYSLTMALATGARKYGVLLKYPAPVTSLKPRPDGTWDVETPQGSVRANRIVNAAGFWAREVGKMIGLDHPLIPVQHQYVVTSTIPEVKALKRELPVLRDLEGSYYLRQERDGLLFGPYESQEKMKLQASWVAHGVPPGFGKELFESDLDRITEHVEAAMEMVPVLKKADIINIVNGPITYSPDILPMVGPHQGVRNYWVAIGFGYGIIHAGGVGKYLSDWILHGEPPFDLIELDPNRYGKWTTTQYTEAKARESYGFNNIVGYPKEERFAGRPTQRVSGLYKILESKCSMGFHAGWEQPHWFYKPGQDTQYRPSFRRTNWFRPVGSEYKQVMQRVGVIDLSPFGKFNIKGQDSTQLLDHLCANVIPKVGFTNISHMLTPRGRVYAELTVSHQSPGEFLLITGSGSELHDLRWIEEAAVRGGYDVEIRNITDELGVLGVAGPYARRVLQKLTSEDLSDDVFKFLQTKSLKISDIPVTAIRISYTGELGWELYHRREDSAALYERIMNAGQEEGIDNFGTYALNALRLEKAFRAWGSEMNCDTNPLEAGLDYFIKLNKPADFTGKQALKQIKAKGLKRRLVCLTLATDDVDPEGNESVWYKGKVIGNTTSGSYSYSIQKSLAFAYVPVELSEVGQQVEVELLGKNYPATIIQEPLVLTEPTRTRLQKDGRKS.

The N-terminal 43 residues, 1 to 43, are a transit peptide targeting the mitochondrion; the sequence is MLRLGALRLRGLALRSSQGRPSSAGLREGQESPPSPPEWKDRA. Residues 15-39 are disordered; that stretch reads RSSQGRPSSAGLREGQESPPSPPEW. Residues 52–53, 73–74, and 80–88 each bind FAD; these read CV, EK, and GSTWHAAGL. His-84 carries the tele-8alpha-FAD histidine modification. N6-acetyllysine is present on Lys-107. Lys-141 bears the N6-acetyllysine; alternate mark. Lys-141 is subject to N6-succinyllysine; alternate. The residue at position 161 (Lys-161) is an N6-acetyllysine. Val-212 is a binding site for FAD. Lys-216 carries the N6-acetyllysine modification. Trp-244 lines the FAD pocket. Lys-310 and Lys-312 each carry N6-succinyllysine. An N6-acetyllysine mark is found at Lys-328 and Lys-353. 390–395 contributes to the FAD binding site; the sequence is FGYGII. Residues Lys-427, Lys-469, and Lys-516 each carry the N6-acetyllysine; alternate modification. Residues Lys-427, Lys-469, and Lys-516 each carry the N6-succinyllysine; alternate modification. 573–575 serves as a coordination point for (6S)-5,6,7,8-tetrahydrofolate; it reads ELT. Lys-648 carries the N6-acetyllysine; alternate modification. Lys-648 is subject to N6-succinyllysine; alternate. Residues Tyr-669, 676-678, and Tyr-737 contribute to the (6S)-5,6,7,8-tetrahydrofolate site; that span reads ELY. An N6-acetyllysine modification is found at Lys-757. N6-acetyllysine; alternate is present on Lys-786. Position 786 is an N6-succinyllysine; alternate (Lys-786). The residue at position 788 (Lys-788) is an N6-succinyllysine.

This sequence belongs to the GcvT family. It depends on FAD as a cofactor.

It is found in the mitochondrion. It carries out the reaction (6S)-5,6,7,8-tetrahydrofolyl-(gamma-L-Glu)(n) + N,N-dimethylglycine + oxidized [electron-transfer flavoprotein] + H(+) = (6R)-5,10-methylenetetrahydrofolyl-(gamma-L-Glu)(n) + sarcosine + reduced [electron-transfer flavoprotein]. It participates in amine and polyamine degradation; betaine degradation; sarcosine from betaine: step 2/2. Its function is as follows. Catalyzes the demethylation of N,N-dimethylglycine to sarcosine. Also has activity with sarcosine in vitro. The protein is Dimethylglycine dehydrogenase, mitochondrial (Dmgdh) of Rattus norvegicus (Rat).